Reading from the N-terminus, the 88-residue chain is Large ribosomal subunit protein bL27 (88 aa).

Positions 1–24 (MAHKKAGGSSRNGRDSEGRRLGVK) are disordered.

Belongs to the bacterial ribosomal protein bL27 family.

This chain is Large ribosomal subunit protein bL27, found in Methylobacterium radiotolerans (strain ATCC 27329 / DSM 1819 / JCM 2831 / NBRC 15690 / NCIMB 10815 / 0-1).